The sequence spans 278 residues: 2-dehydro-3-deoxyphosphooctonate aldolase (278 aa).

Belongs to the KdsA family.

It is found in the cytoplasm. The catalysed reaction is D-arabinose 5-phosphate + phosphoenolpyruvate + H2O = 3-deoxy-alpha-D-manno-2-octulosonate-8-phosphate + phosphate. The protein operates within carbohydrate biosynthesis; 3-deoxy-D-manno-octulosonate biosynthesis; 3-deoxy-D-manno-octulosonate from D-ribulose 5-phosphate: step 2/3. It functions in the pathway bacterial outer membrane biogenesis; lipopolysaccharide biosynthesis. In Bartonella quintana (strain Toulouse) (Rochalimaea quintana), this protein is 2-dehydro-3-deoxyphosphooctonate aldolase.